Consider the following 91-residue polypeptide: Small ribosomal subunit protein uS15 (91 aa).

This sequence belongs to the universal ribosomal protein uS15 family. As to quaternary structure, part of the 30S ribosomal subunit. Forms a bridge to the 50S subunit in the 70S ribosome, contacting the 23S rRNA.

Its function is as follows. One of the primary rRNA binding proteins, it binds directly to 16S rRNA where it helps nucleate assembly of the platform of the 30S subunit by binding and bridging several RNA helices of the 16S rRNA. Functionally, forms an intersubunit bridge (bridge B4) with the 23S rRNA of the 50S subunit in the ribosome. The sequence is that of Small ribosomal subunit protein uS15 from Deinococcus geothermalis (strain DSM 11300 / CIP 105573 / AG-3a).